A 232-amino-acid polypeptide reads, in one-letter code: Cytochrome c oxidase subunit 2 (232 aa).

Topologically, residues 1–30 (MNNFFQDFNLLFSSSLFSSYMDWFYNFNCS) are mitochondrial intermembrane. Residues 31–52 (LLFGVLSFVSTMFVYLLLSSFY) form a helical membrane-spanning segment. At 53 to 69 (FKSKKIEYQFGELLCSV) the chain is on the mitochondrial matrix side. Residues 70 to 89 (FPTLILVMQMVPSLSLLYYY) traverse the membrane as a helical segment. Topologically, residues 90–232 (GLMNLDSSLT…KSWCVGLLSD (143 aa)) are mitochondrial intermembrane. The Cu cation site is built by His-164, Cys-199, Glu-201, Cys-203, His-207, and Met-210. Glu-201 contacts Mg(2+).

It belongs to the cytochrome c oxidase subunit 2 family. In terms of assembly, component of the cytochrome c oxidase (complex IV, CIV), a multisubunit enzyme composed of a catalytic core of 3 subunits and several supernumerary subunits. The complex exists as a monomer or a dimer and forms supercomplexes (SCs) in the inner mitochondrial membrane with ubiquinol-cytochrome c oxidoreductase (cytochrome b-c1 complex, complex III, CIII). Cu cation is required as a cofactor.

It is found in the mitochondrion inner membrane. It catalyses the reaction 4 Fe(II)-[cytochrome c] + O2 + 8 H(+)(in) = 4 Fe(III)-[cytochrome c] + 2 H2O + 4 H(+)(out). Component of the cytochrome c oxidase, the last enzyme in the mitochondrial electron transport chain which drives oxidative phosphorylation. The respiratory chain contains 3 multisubunit complexes succinate dehydrogenase (complex II, CII), ubiquinol-cytochrome c oxidoreductase (cytochrome b-c1 complex, complex III, CIII) and cytochrome c oxidase (complex IV, CIV), that cooperate to transfer electrons derived from NADH and succinate to molecular oxygen, creating an electrochemical gradient over the inner membrane that drives transmembrane transport and the ATP synthase. Cytochrome c oxidase is the component of the respiratory chain that catalyzes the reduction of oxygen to water. Electrons originating from reduced cytochrome c in the intermembrane space (IMS) are transferred via the dinuclear copper A center (CU(A)) of subunit 2 and heme A of subunit 1 to the active site in subunit 1, a binuclear center (BNC) formed by heme A3 and copper B (CU(B)). The BNC reduces molecular oxygen to 2 water molecules using 4 electrons from cytochrome c in the IMS and 4 protons from the mitochondrial matrix. This is Cytochrome c oxidase subunit 2 (COII) from Ascaris suum (Pig roundworm).